The sequence spans 364 residues: Trans-enoyl reductase sthE (364 aa).

51-54 (TDYK) serves as a coordination point for NADP(+). A substrate-binding site is contributed by 137–144 (WGTAALAI). Residues 172–175 (ATAT), 195–198 (SESS), Tyr213, and 261–262 (LE) each bind NADP(+). 281–285 (GFEGQ) is a binding site for substrate. 351–352 (VK) is an NADP(+) binding site.

Belongs to the zinc-containing alcohol dehydrogenase family. As to quaternary structure, monomer.

It carries out the reaction 7 malonyl-CoA + acetyl-CoA + 10 AH2 + 5 S-adenosyl-L-methionine + 2 H(+) = dehydroprobetaenone I + 10 A + 5 S-adenosyl-L-homocysteine + 7 CO2 + 8 CoA + 6 H2O. It participates in mycotoxin biosynthesis. Trans-enoyl reductase; part of the gene cluster that mediates the biosynthesis of the phytotoxin stemphyloxin II. The first step of the pathway is the synthesis of dehydroprobetaenone I by the polyketide synthase sthA and the enoyl reductase sthE via condensation of one acetyl-CoA starter unit with 7 malonyl-CoA units and 5 methylations. The C-terminal reductase (R) domain of sthA catalyzes the reductive release of the polyketide chain. Because sthA lacks a designated enoylreductase (ER) domain, the required activity is provided the enoyl reductase sthE. The short-chain dehydrogenase/reductase sthC then catalyzes reduction of dehydroprobetaenone I to probetaenone I. The cytochrome P450 monooxygenase sthF catalyzes successive epoxidation, oxidation (resulting from epoxide opening) and hydroxylation to install a tertiary alcohol in the decaline ring to yield betaenone C from dehydroprobetaenone I and betaenone B from probetaenone I. The FAD-linked oxidoreductase sthB is responsible for the conversion of betaenone C to betaenone A via an intramolecular aldol reaction between C-1 and C-17 to form the bridged tricyclic system in betaenone A. Finally, the cytochrome P450 monooxygenase sthD catalyzes the hydroxylation of C-15 to afford the final metabolite stemphyloxin II. In Phaeosphaeria nodorum (strain SN15 / ATCC MYA-4574 / FGSC 10173) (Glume blotch fungus), this protein is Trans-enoyl reductase sthE.